Consider the following 1798-residue polypeptide: Focadhesin (1798 aa).

At Lys816 the chain carries N6-acetyllysine.

Interacts with VCL. As to expression, expressed by glial and neuronal cells in brain.

It is found in the cell junction. It localises to the focal adhesion. The protein localises to the cytoplasm. Its subcellular location is the cytosol. In terms of biological role, required for the maintenance of SKIC2 and SKIC3 proteostatic levels in the liver. May be involved in the regulation of RNA degradation by the exosome complex. Potential tumor suppressor in gliomas. The chain is Focadhesin (Focad) from Mus musculus (Mouse).